Consider the following 330-residue polypeptide: Polyprenyl transferase ausN (330 aa).

The next 5 membrane-spanning stretches (helical) occupy residues 116 to 136 (AATIFTACLFVLGCSLLLFLP), 165 to 185 (LILINIAWAIPMAMHSLGMEP), 189 to 209 (ILSMLCMCVFFSAVIVMIDLV), 238 to 258 (AYSLFAISSLALLFGGVLGGL), and 260 to 280 (VPFVLFSVGGHIVGFWRFLRA).

The protein belongs to the UbiA prenyltransferase family. Mg(2+) is required as a cofactor.

Its subcellular location is the membrane. It carries out the reaction 3,5-dimethylorsellinate + (2E,6E)-farnesyl diphosphate = (3R)-3-farnesyl-6-hydroxy-2,3,5-trimethyl-4-oxocyclohexa-1,5-diene-1-carboxylate + diphosphate + H(+). It functions in the pathway secondary metabolite biosynthesis; terpenoid biosynthesis. In terms of biological role, polyprenyl transferase; part of the gene cluster B that mediates the biosynthesis of austinol and dehydroaustinol, two fungal meroterpenoids. The first step of the pathway is the synthesis of 3,5-dimethylorsellinic acid by the polyketide synthase ausA. 3,5-dimethylorsellinic acid is then prenylated by the polyprenyl transferase ausN. Further epoxidation by the FAD-dependent monooxygenase ausM and cyclization by the probable terpene cyclase ausL lead to the formation of protoaustinoid A. Protoaustinoid A is then oxidized to spiro-lactone preaustinoid A3 by the combined action of the FAD-binding monooxygenases ausB and ausC, and the dioxygenase ausE. Acid-catalyzed keto-rearrangement and ring contraction of the tetraketide portion of preaustinoid A3 by ausJ lead to the formation of preaustinoid A4. The aldo-keto reductase ausK, with the help of ausH, is involved in the next step by transforming preaustinoid A4 into isoaustinone which is in turn hydroxylated by the P450 monooxygenase ausI to form austinolide. Finally, the cytochrome P450 monooxygenase ausG modifies austinolide to austinol. Austinol can be further modified to dehydroaustinol which forms a diffusible complex with diorcinol that initiates conidiation. Due to genetic rearrangements of the clusters and the subsequent loss of some enzymes, the end products of the Emericella nidulans austinoid biosynthesis clusters are austinol and dehydroaustinol, even if additional enzymes, such as the O-acetyltransferase ausQ and the cytochrome P450 monooxygenase ausR are still functional. In Emericella nidulans (strain FGSC A4 / ATCC 38163 / CBS 112.46 / NRRL 194 / M139) (Aspergillus nidulans), this protein is Polyprenyl transferase ausN.